Reading from the N-terminus, the 184-residue chain is Dirigent protein 14 (184 aa).

Positions 1–20 (MANQIYLFSLICLSVLLCQS) are cleaved as a signal peptide. Cysteines 36 and 182 form a disulfide. 2 N-linked (GlcNAc...) asparagine glycosylation sites follow: asparagine 55 and asparagine 119.

The protein belongs to the plant dirigent protein family. As to quaternary structure, homodimer.

The protein resides in the secreted. It is found in the extracellular space. The protein localises to the apoplast. Dirigent proteins impart stereoselectivity on the phenoxy radical-coupling reaction, yielding optically active lignans from two molecules of coniferyl alcohol in the biosynthesis of lignans, flavonolignans, and alkaloids and thus plays a central role in plant secondary metabolism. This chain is Dirigent protein 14 (DIR14), found in Arabidopsis thaliana (Mouse-ear cress).